Consider the following 330-residue polypeptide: Embigin (330 aa).

An N-terminal signal peptide occupies residues 1–33; sequence MRSHTGLRALVAPGYPLLLLCLLAATRPDPAEG. Residues 34–254 lie on the Extracellular side of the membrane; it reads DPTDPTFTSL…QLGESEEQNE (221 aa). Ig-like V-type domains lie at 38–161 and 162–256; these read PTFT…IHVP and KAHG…NELV. Asn55, Asn62, Asn70, Asn101, Asn118, Asn191, Asn198, Asn216, and Asn221 each carry an N-linked (GlcNAc...) asparagine glycan. Cystine bridges form between Cys89–Cys145 and Cys182–Cys240. Residues 255-283 form a helical membrane-spanning segment; sequence LVVLSFLVPLKPFLAILAEVILLVAIILL. Topologically, residues 284–330 are cytoplasmic; that stretch reads CEVYTHKKKNDPDAGKEFEQIEQLKSDDSNGIENNVPRYRKTDSADQ. Basic and acidic residues predominate over residues 293-311; sequence NDPDAGKEFEQIEQLKSDD. The segment at 293-330 is disordered; sequence NDPDAGKEFEQIEQLKSDDSNGIENNVPRYRKTDSADQ. At Ser312 the chain carries Phosphoserine.

Interacts with SLC16A1, SLC16A6 and SLC16A7. Only member of the immunoglobulin superfamily to be expressed in embryonal carcinoma cells, which resemble multipotential cells of early embryos.

Its subcellular location is the cell membrane. The protein resides in the synapse. Functionally, plays a role in targeting the monocarboxylate transporters SLC16A1, SLC16A6 and SLC16A7 to the cell membrane. Plays a role in the outgrowth of motoneurons and in the formation of neuromuscular junctions. Following muscle denervation, promotes nerve terminal sprouting and the formation of additional acetylcholine receptor clusters at synaptic sites without affecting terminal Schwann cell number or morphology. Delays the retraction of terminal sprouts following re-innervation of denervated endplates. The polypeptide is Embigin (Emb) (Mus musculus (Mouse)).